The sequence spans 190 residues: Putative 3-methyladenine DNA glycosylase (190 aa).

The protein belongs to the DNA glycosylase MPG family.

The chain is Putative 3-methyladenine DNA glycosylase from Rubrobacter xylanophilus (strain DSM 9941 / JCM 11954 / NBRC 16129 / PRD-1).